The primary structure comprises 638 residues: DNA repair protein rhp41 (638 aa).

It belongs to the XPC family.

It localises to the nucleus. Has a role in the nucleotide excision repair (NER) pathway. Acts in both transcription-coupled repair (TCR) which removes damage from the transcribed strand of active genes and in global genome repair (GGR) which removes damage in untranscribed DNA. Involved in the repair of UV-induced damages where it is involved in the removal of cyclobutane pyrimidine dimers (CPDs). The chain is DNA repair protein rhp41 (rhp41) from Schizosaccharomyces pombe (strain 972 / ATCC 24843) (Fission yeast).